Consider the following 73-residue polypeptide: Translation initiation factor IF-1 (73 aa).

Residues methionine 1–isoleucine 72 enclose the S1-like domain.

The protein belongs to the IF-1 family. In terms of assembly, component of the 30S ribosomal translation pre-initiation complex which assembles on the 30S ribosome in the order IF-2 and IF-3, IF-1 and N-formylmethionyl-tRNA(fMet); mRNA recruitment can occur at any time during PIC assembly.

It is found in the cytoplasm. In terms of biological role, one of the essential components for the initiation of protein synthesis. Stabilizes the binding of IF-2 and IF-3 on the 30S subunit to which N-formylmethionyl-tRNA(fMet) subsequently binds. Helps modulate mRNA selection, yielding the 30S pre-initiation complex (PIC). Upon addition of the 50S ribosomal subunit IF-1, IF-2 and IF-3 are released leaving the mature 70S translation initiation complex. This Lactobacillus johnsonii (strain CNCM I-12250 / La1 / NCC 533) protein is Translation initiation factor IF-1.